A 901-amino-acid polypeptide reads, in one-letter code: HTH-type transcriptional regulator MalT (901 aa).

39–46 (SPAGYGKT) contributes to the ATP binding site. Residues 829-894 (ELIRTSPLTQ…DAVQHAQQLL (66 aa)) form the HTH luxR-type domain. Residues 853 to 872 (NEQIAGELDVAATTIKTHIR) constitute a DNA-binding region (H-T-H motif).

Belongs to the MalT family. As to quaternary structure, monomer in solution. Oligomerizes to an active state in the presence of the positive effectors ATP and maltotriose.

Activated by ATP and maltotriose, which are both required for DNA binding. Its function is as follows. Positively regulates the transcription of the maltose regulon whose gene products are responsible for uptake and catabolism of malto-oligosaccharides. Specifically binds to the promoter region of its target genes, recognizing a short DNA motif called the MalT box. This is HTH-type transcriptional regulator MalT from Klebsiella pneumoniae subsp. pneumoniae (strain ATCC 700721 / MGH 78578).